Reading from the N-terminus, the 118-residue chain is MKPRPFKEEFTLEERAKESAAMIASYPDRIPVIVEKFSRSNLPEMEKRKYLVPCNMPVGQFIFILRSRLHLSPGTALFVFVNNTLPQTAQLMGSVYESYKDEGDGFLYLCYSSEKTFG.

The Phosphatidylethanolamine amidated glycine moiety is linked to residue G118.

This sequence belongs to the ATG8 family. Interacts with ATG4. Post-translationally, the C-terminal Gly is amidated with phosphatidylethanolamine by an activating system similar to that for ubiquitin.

The protein resides in the cytoplasmic vesicle. It is found in the autophagosome membrane. It localises to the vacuole membrane. The protein localises to the cytoplasm. Its subcellular location is the cytoskeleton. Functionally, ubiquitin-like modifier involved in autophagosomes formation. May mediate the delivery of the autophagosomes to the vacuole via the microtubule cytoskeleton. This Oryza sativa subsp. japonica (Rice) protein is Autophagy-related protein 8D (ATG8D).